A 38-amino-acid chain; its full sequence is Potassium channel toxin alpha-KTx 6.4 (38 aa).

4 disulfides stabilise this stretch: cysteine 6–cysteine 27, cysteine 12–cysteine 32, cysteine 16–cysteine 34, and cysteine 22–cysteine 37.

It belongs to the short scorpion toxin superfamily. Potassium channel inhibitor family. Alpha-KTx 06 subfamily. Expressed by the venom gland.

The protein resides in the secreted. Potently, completely and reversibly blocks voltage-gated potassium channel Kv1.2/KCNA2 and Shaker B (Sh). Also blocks small conductance (SK) calcium-activated potassium channel (KCNN). The sequence is that of Potassium channel toxin alpha-KTx 6.4 from Pandinus imperator (Emperor scorpion).